A 306-amino-acid chain; its full sequence is Aspartate carbamoyltransferase catalytic subunit (306 aa).

Positions 54 and 55 each coordinate carbamoyl phosphate. Lys-83 is an L-aspartate binding site. Residues Arg-104, His-132, and Gln-135 each contribute to the carbamoyl phosphate site. Residues Arg-165 and Arg-227 each contribute to the L-aspartate site. Leu-266 and Pro-267 together coordinate carbamoyl phosphate.

This sequence belongs to the aspartate/ornithine carbamoyltransferase superfamily. ATCase family. Heterododecamer (2C3:3R2) of six catalytic PyrB chains organized as two trimers (C3), and six regulatory PyrI chains organized as three dimers (R2).

It carries out the reaction carbamoyl phosphate + L-aspartate = N-carbamoyl-L-aspartate + phosphate + H(+). Its pathway is pyrimidine metabolism; UMP biosynthesis via de novo pathway; (S)-dihydroorotate from bicarbonate: step 2/3. Functionally, catalyzes the condensation of carbamoyl phosphate and aspartate to form carbamoyl aspartate and inorganic phosphate, the committed step in the de novo pyrimidine nucleotide biosynthesis pathway. The chain is Aspartate carbamoyltransferase catalytic subunit from Finegoldia magna (strain ATCC 29328 / DSM 20472 / WAL 2508) (Peptostreptococcus magnus).